Here is a 206-residue protein sequence, read N- to C-terminus: Transmembrane emp24 domain-containing protein bai (206 aa).

Positions 1–20 are cleaved as a signal peptide; the sequence is MMKAILATLAIFGCIWPGQS. The Lumenal segment spans residues 21–172; it reads VMFHLTPNTQ…RDTNEKTNSR (152 aa). In terms of domain architecture, GOLD spans 30–140; it reads QKCLKEDIQA…LKPLEVDLKR (111 aa). A helical membrane pass occupies residues 173–193; sequence VLFFSIFSMCCLLGLATWQVL. Over 194-206 the chain is Cytoplasmic; the sequence is YLRRYFKAKKLIE.

The protein belongs to the EMP24/GP25L family.

It is found in the membrane. Functionally, eca and bai are essential, though not redundant, for dorsoventral patterning of the embryo. Specifically required during early embryogenesis for the activity of maternal tkv, while the zygotic tkv is not affected. This chain is Transmembrane emp24 domain-containing protein bai, found in Drosophila willistoni (Fruit fly).